The following is a 409-amino-acid chain: Elongation factor Tu, cyanelle (409 aa).

The tr-type G domain maps to 10–214; sequence KPHVNIGTIG…AVDEYIPTPE (205 aa). Positions 19 to 26 are G1; the sequence is GHVDHGKT. GTP is bound at residue 19 to 26; sequence GHVDHGKT. Thr-26 provides a ligand contact to Mg(2+). Residues 60 to 64 form a G2 region; that stretch reads GITIN. Positions 81–84 are G3; it reads DCPG. GTP-binding positions include 81-85 and 136-139; these read DCPGH and NKED. Residues 136–139 form a G4 region; sequence NKED. The tract at residues 174–176 is G5; sequence SAL.

It belongs to the TRAFAC class translation factor GTPase superfamily. Classic translation factor GTPase family. EF-Tu/EF-1A subfamily.

The protein resides in the plastid. It is found in the cyanelle. The enzyme catalyses GTP + H2O = GDP + phosphate + H(+). In terms of biological role, GTP hydrolase that promotes the GTP-dependent binding of aminoacyl-tRNA to the A-site of ribosomes during protein biosynthesis. The protein is Elongation factor Tu, cyanelle (tufA) of Cyanophora paradoxa.